Reading from the N-terminus, the 480-residue chain is ATP-dependent rRNA helicase RRP3 (480 aa).

Basic and acidic residues-rich tracts occupy residues 1–17 and 33–46; these read MAKA…KEES and DTTK…EPKK. The disordered stretch occupies residues 1 to 63; it reads MAKATEKRVK…VEVDESEEQT (63 aa). The Q motif motif lies at 64-92; sequence KTFKDLGVIDSICETCEELKFTKPTPIQA. One can recognise a Helicase ATP-binding domain in the interval 95–266; sequence IPYALEGRDI…RASLVDPVRV (172 aa). Residue 108–115 coordinates ATP; it reads AQTGSGKT. A DEAD box motif is present at residues 214–217; the sequence is DEAD. A Helicase C-terminal domain is found at 277 to 437; sequence NLLQYMVFCP…SYPLESEAVM (161 aa). A disordered region spans residues 450-480; it reads AIQEMKGEDGTKKRSKFDKKRRRDEMDIGEQ. A compositionally biased stretch (basic residues) spans 462–471; that stretch reads KRSKFDKKRR.

The protein belongs to the DEAD box helicase family. DDX47/RRP3 subfamily. As to quaternary structure, interacts with the SSU processome.

The protein localises to the nucleus. The enzyme catalyses ATP + H2O = ADP + phosphate + H(+). Functionally, ATP-dependent rRNA helicase required for pre-ribosomal RNA processing. Involved in the maturation of the 35S-pre-rRNA and to its cleavage to mature 18S rRNA. The sequence is that of ATP-dependent rRNA helicase RRP3 from Yarrowia lipolytica (strain CLIB 122 / E 150) (Yeast).